The chain runs to 734 residues: Polyribonucleotide nucleotidyltransferase (734 aa).

Mg(2+) is bound by residues Asp505 and Asp511. A KH domain is found at Pro572–Ile631. One can recognise an S1 motif domain in the interval Gly641–Lys715.

The protein belongs to the polyribonucleotide nucleotidyltransferase family. Mg(2+) serves as cofactor.

It localises to the cytoplasm. It catalyses the reaction RNA(n+1) + phosphate = RNA(n) + a ribonucleoside 5'-diphosphate. In terms of biological role, involved in mRNA degradation. Catalyzes the phosphorolysis of single-stranded polyribonucleotides processively in the 3'- to 5'-direction. In Prosthecochloris aestuarii (strain DSM 271 / SK 413), this protein is Polyribonucleotide nucleotidyltransferase.